Here is a 219-residue protein sequence, read N- to C-terminus: Small ribosomal subunit protein uS3 (219 aa).

One can recognise a KH type-2 domain in the interval Ile-38–Lys-106.

This sequence belongs to the universal ribosomal protein uS3 family. As to quaternary structure, part of the 30S ribosomal subunit. Forms a tight complex with proteins S10 and S14.

In terms of biological role, binds the lower part of the 30S subunit head. Binds mRNA in the 70S ribosome, positioning it for translation. This Levilactobacillus brevis (strain ATCC 367 / BCRC 12310 / CIP 105137 / JCM 1170 / LMG 11437 / NCIMB 947 / NCTC 947) (Lactobacillus brevis) protein is Small ribosomal subunit protein uS3.